We begin with the raw amino-acid sequence, 326 residues long: Cytosolic sulfotransferase 7 (326 aa).

3'-phosphoadenylyl sulfate is bound at residue 72-77 (KSGTTW). Histidine 138 serves as the catalytic Proton acceptor. 3'-phosphoadenylyl sulfate is bound by residues arginine 160, serine 168, tyrosine 226, and 292–294 (RKG).

This sequence belongs to the sulfotransferase 1 family.

It is found in the cytoplasm. In terms of biological role, sulfotransferase that utilizes 3'-phospho-5'-adenylyl sulfate (PAPS) as sulfonate donor. The sequence is that of Cytosolic sulfotransferase 7 (SOT7) from Arabidopsis thaliana (Mouse-ear cress).